The chain runs to 217 residues: 3,4-dihydroxy-2-butanone 4-phosphate synthase (217 aa).

Residues 37–38 (RE), Asp-42, 150–154 (RRGHT), and Glu-174 contribute to the D-ribulose 5-phosphate site. Glu-38 contacts Mg(2+). Position 153 (His-153) interacts with Mg(2+).

This sequence belongs to the DHBP synthase family. As to quaternary structure, homodimer. Requires Mg(2+) as cofactor. Mn(2+) is required as a cofactor.

It carries out the reaction D-ribulose 5-phosphate = (2S)-2-hydroxy-3-oxobutyl phosphate + formate + H(+). It functions in the pathway cofactor biosynthesis; riboflavin biosynthesis; 2-hydroxy-3-oxobutyl phosphate from D-ribulose 5-phosphate: step 1/1. Functionally, catalyzes the conversion of D-ribulose 5-phosphate to formate and 3,4-dihydroxy-2-butanone 4-phosphate. This chain is 3,4-dihydroxy-2-butanone 4-phosphate synthase, found in Yersinia pseudotuberculosis serotype O:1b (strain IP 31758).